The chain runs to 78 residues: Translational regulator CsrA (78 aa).

It belongs to the CsrA/RsmA family. As to quaternary structure, homodimer; the beta-strands of each monomer intercalate to form a hydrophobic core, while the alpha-helices form wings that extend away from the core.

It localises to the cytoplasm. A translational regulator that binds mRNA to regulate translation initiation and/or mRNA stability. Usually binds in the 5'-UTR at or near the Shine-Dalgarno sequence preventing ribosome-binding, thus repressing translation. Its main target seems to be the major flagellin gene, while its function is anatagonized by FliW. The polypeptide is Translational regulator CsrA (Natranaerobius thermophilus (strain ATCC BAA-1301 / DSM 18059 / JW/NM-WN-LF)).